The sequence spans 337 residues: Formamidase (337 aa).

In terms of domain architecture, CN hydrolase spans 14 to 257 (VVIGLVQLQL…DEIITAEVRP (244 aa)). Glutamate 60 serves as the catalytic Proton acceptor. Lysine 129 functions as the Proton donor in the catalytic mechanism. The active-site Nucleophile is cysteine 162.

The protein belongs to the carbon-nitrogen hydrolase superfamily. Aliphatic amidase family.

It catalyses the reaction formamide + H2O = formate + NH4(+). Its function is as follows. Is an aliphatic amidase with a restricted substrate specificity, as it only hydrolyzes formamide. This is Formamidase from Bradyrhizobium sp. (strain ORS 278).